The primary structure comprises 820 residues: Catenin beta (820 aa).

Positions 1–16 are enriched in polar residues; that stretch reads MEQARYSNQQSVNPQQ. The disordered stretch occupies residues 1-74; that stretch reads MEQARYSNQQ…SRHEDGGEEA (74 aa). Over residues 52 to 63 the composition is skewed to low complexity; sequence SSATSHPPSVSS. ARM repeat units follow at residues 157-196, 199-239, 241-280, 283-322, 367-405, 406-445, 448-489, 495-535, 603-642, and 644-683; these read NYQD…QLSK, ASRH…NLSH, RAGL…NLLL, EGSK…ILAY, HNNK…RNLS, DCHR…NLTC, SRNK…HVTS, EMGQ…NLAL, SHNR…ELSL, and KQGA…RMSD. The disordered stretch occupies residues 708–811; it reads PWGDPLDMPS…LDSIPPADNT (104 aa). Positions 785–796 are enriched in low complexity; sequence GMDPGLPDMGPP.

The protein belongs to the beta-catenin family.

The protein resides in the cytoplasm. Its subcellular location is the cytoskeleton. In terms of biological role, binds to the cytoplasmic domain of the cell-cell adhesion molecule E-cadherin, and perhaps to other (membrane) proteins. The association of catenins to cadherins produces a complex which is linked to the actin filament network, and which seems to be of primary importance for cadherins cell-adhesion properties. In Tripneustes gratilla (Hawaian sea urchin), this protein is Catenin beta.